We begin with the raw amino-acid sequence, 543 residues long: MTRYIFVTGGVVSSLGKGIASASLAAILEARGLKVTMLKLDPYINVDPGTMSPFQHGEVFVTHDGAETDLDLGHYERFIRTTMSKSNNFTTGRVYEDVLRKERRGDYLGATIQVIPHITDEIKRRIIKGAGDADVALVEIGGTVGDIESQPFLEAIRQLRVEVGAKRAMLMHLTLVPYIATAGETKTKPTQHSVKELRSIGLQPDVLVCRSDHPIDVSSRRKIALFTNVEERAVISLEDVDTIYKIPGVLHAQGLDDFVVERFGLECGGADLSEWDRVVDAKLNPEKEVTIAMVGKYMELLDAYKSLIEAMSHAGIQNRTKVNLRYIDSEDIENQGTGLLEGVDAILVPGGFGLRGVEGKIKTVQYARENKIPYLGICLGMQVAVIEYARNVVGWTDANSTEFDMASQHPVVGLITEWQDAAGSVEQRSENSDLGGTMRLGAQDCQLQAGSKVHDCYGKDVIVERHRHRYEVNNNLLPQLTEAGLKVTGRSGDGALVEVVEAPDHPWFVACQFHPEFTSTPRDGHPLFSGFVNAALAQKAKKV.

The segment at 1-265 (MTRYIFVTGG…DDFVVERFGL (265 aa)) is amidoligase domain. CTP is bound at residue serine 13. Serine 13 is a binding site for UTP. Residues 14 to 19 (SLGKGI) and aspartate 71 contribute to the ATP site. Residues aspartate 71 and glutamate 139 each contribute to the Mg(2+) site. Residues 146–148 (DIE), 186–191 (KTKPTQ), and lysine 222 each bind CTP. UTP-binding positions include 186–191 (KTKPTQ) and lysine 222. Positions 290–541 (TIAMVGKYME…VNAALAQKAK (252 aa)) constitute a Glutamine amidotransferase type-1 domain. Glycine 351 serves as a coordination point for L-glutamine. The active-site Nucleophile; for glutamine hydrolysis is the cysteine 378. Residues 379–382 (LGMQ), glutamate 402, and arginine 469 contribute to the L-glutamine site. Active-site residues include histidine 514 and glutamate 516.

This sequence belongs to the CTP synthase family. As to quaternary structure, homotetramer.

It catalyses the reaction UTP + L-glutamine + ATP + H2O = CTP + L-glutamate + ADP + phosphate + 2 H(+). The catalysed reaction is L-glutamine + H2O = L-glutamate + NH4(+). The enzyme catalyses UTP + NH4(+) + ATP = CTP + ADP + phosphate + 2 H(+). The protein operates within pyrimidine metabolism; CTP biosynthesis via de novo pathway; CTP from UDP: step 2/2. Its activity is regulated as follows. Allosterically activated by GTP, when glutamine is the substrate; GTP has no effect on the reaction when ammonia is the substrate. The allosteric effector GTP functions by stabilizing the protein conformation that binds the tetrahedral intermediate(s) formed during glutamine hydrolysis. Inhibited by the product CTP, via allosteric rather than competitive inhibition. Catalyzes the ATP-dependent amination of UTP to CTP with either L-glutamine or ammonia as the source of nitrogen. Regulates intracellular CTP levels through interactions with the four ribonucleotide triphosphates. The polypeptide is CTP synthase (Ectopseudomonas mendocina (strain ymp) (Pseudomonas mendocina)).